The primary structure comprises 105 residues: N(2)-fixation sustaining protein CowN (105 aa).

It belongs to the CowN family.

Its function is as follows. Is required to sustain N(2)-dependent growth in the presence of low levels of carbon monoxide (CO). Probably acts by protecting the N(2) fixation ability of the nitrogenase complex, which is inactivated in the presence of CO. The sequence is that of N(2)-fixation sustaining protein CowN from Tolumonas auensis (strain DSM 9187 / NBRC 110442 / TA 4).